The sequence spans 394 residues: C-19 steroid 1alpha-hydroxylase (394 aa).

6 residues coordinate heme b: histidine 81, arginine 85, arginine 281, glycine 335, histidine 338, and cysteine 340.

It belongs to the cytochrome P450 family. It depends on heme b as a cofactor.

It catalyses the reaction testosterone + 2 reduced [2Fe-2S]-[ferredoxin] + O2 + 2 H(+) = 1alpha-hydroxytestosterone + 2 oxidized [2Fe-2S]-[ferredoxin] + H2O. The enzyme catalyses androst-4-ene-3,17-dione + 2 reduced [2Fe-2S]-[ferredoxin] + O2 + 2 H(+) = 1alpha-hydroxyandrost-4-ene-3,17-dione + 2 oxidized [2Fe-2S]-[ferredoxin] + H2O. Functionally, hydroxylase that can catalyze the in vitro conversion of the sesquiterpenoid nootkatone, a natural organic compound produced by some plants, to at least five hydrophilic products. The native ferredoxin reductase FdR_B and either Fdx2 or Fdx8 ferredoxins can act as the redox partners for the conversion of nootkatone. In addition, acts as a steroid 1alpha-hydroxylase, when associated in vitro with the surrogate redox partners bovine adrenodoxin (Adx) and adrenodoxin reductase (Adr). Acts on several C-19 steroid substrates, including testosterone and androstenedione, which are hydroxylated to 1alpha-hydroxytestosterone and 1alpha-hydroxyandrostenedione, respectively. Can use their derivatives testosterone-acetate and 11-oxoandrostenedione, but not vitamin D3 and 25-hydroxyvitamin D3. Also catalyzes the hydroxylation of the C-21 steroid 11-deoxycorticosterone to 1alpha-hydroxy-11-deoxycorticosterone. Catalyzes the hydroxylation of the C-21 steroid progesterone, leading to the formation of seven products: two major (1alpha-hydroxyprogesterone and 17alpha-hydroxyprogesterone) and five minor products. The chain is C-19 steroid 1alpha-hydroxylase from Sorangium cellulosum (strain So ce56) (Polyangium cellulosum (strain So ce56)).